The sequence spans 156 residues: Zinc metalloproteinase-disintegrin jararin (156 aa).

Residues 1-67 form the Peptidase M12B domain; it reads FVANRMAHEL…NYYGCLLNEP (67 aa). His8 serves as a coordination point for Zn(2+). Glu9 is a catalytic residue. His12 is a binding site for Zn(2+). Intrachain disulfides connect Cys23-Cys47, Cys25-Cys30, Cys78-Cys97, Cys89-Cys107, Cys91-Cys102, Cys101-Cys124, Cys115-Cys121, Cys120-Cys145, and Cys133-Cys152. The region spanning 75 to 156 is the Disintegrin domain; that stretch reads PPFCGNYYPE…GQSGDCPRNS (82 aa). The span at 136–145 shows a compositional bias: basic and acidic residues; the sequence is GRGDNPDDRC. Positions 136–156 are disordered; sequence GRGDNPDDRCTGQSGDCPRNS. A Cell attachment site motif is present at residues 137-139; sequence RGD. Over residues 146–156 the composition is skewed to polar residues; sequence TGQSGDCPRNS.

This sequence belongs to the venom metalloproteinase (M12B) family. P-II subfamily. P-IIb sub-subfamily. As to quaternary structure, monomer. Zn(2+) serves as cofactor. In terms of tissue distribution, expressed by the venom gland.

The protein resides in the secreted. In terms of biological role, snake venom zinc metalloproteinase that inhibits ADP-induced platelet aggregation (probably by binding integrin alpha-IIb/beta-3 (ITGA2B/ITGB3)) and degrades fibrinogen. The sequence is that of Zinc metalloproteinase-disintegrin jararin from Bothrops jararaca (Jararaca).